The chain runs to 110 residues: Competence pilus inhibition repressor (110 aa).

In terms of domain architecture, HTH cro/C1-type spans 7–61; it reads VRFLRKRQGWTQQQLADFSHTSKSNISNLENGNQGYSPAILEYLAKAFNCSVSQI. Positions 18 to 37 form a DNA-binding region, H-T-H motif; it reads QQQLADFSHTSKSNISNLEN.

Represses transcription of the PilB-specific inhibitory protein CpiA. The protein is Competence pilus inhibition repressor of Acinetobacter baylyi (strain ATCC 33305 / BD413 / ADP1).